A 76-amino-acid polypeptide reads, in one-letter code: Conotoxin VnMEKL-012 (76 aa).

Positions 1-18 (MKLTILFLVAAVLMSTQA) are cleaved as a signal peptide. Positions 19-42 (LIQHDGEKSQKAKMKFLTARTLSA) are excised as a propeptide. 3 disulfide bridges follow: Cys49–Cys65, Cys56–Cys70, and Cys64–Cys74.

The protein belongs to the conotoxin O2 superfamily. As to expression, expressed by the venom duct.

It localises to the secreted. This chain is Conotoxin VnMEKL-012, found in Conus ventricosus (Mediterranean cone).